The primary structure comprises 820 residues: DNA mismatch repair protein MutS (820 aa).

618-625 contacts ATP; it reads GPNMAGKS.

Belongs to the DNA mismatch repair MutS family.

This protein is involved in the repair of mismatches in DNA. It is possible that it carries out the mismatch recognition step. This protein has a weak ATPase activity. In Chlamydia trachomatis serovar L2b (strain UCH-1/proctitis), this protein is DNA mismatch repair protein MutS.